A 122-amino-acid polypeptide reads, in one-letter code: Large ribosomal subunit protein uL14 (122 aa).

Belongs to the universal ribosomal protein uL14 family. Part of the 50S ribosomal subunit. Forms a cluster with proteins L3 and L19. In the 70S ribosome, L14 and L19 interact and together make contacts with the 16S rRNA in bridges B5 and B8.

In terms of biological role, binds to 23S rRNA. Forms part of two intersubunit bridges in the 70S ribosome. The chain is Large ribosomal subunit protein uL14 from Carboxydothermus hydrogenoformans (strain ATCC BAA-161 / DSM 6008 / Z-2901).